The following is a 430-amino-acid chain: Serine--tRNA ligase (430 aa).

Residue Thr237–Glu239 coordinates L-serine. Arg268–Glu270 serves as a coordination point for ATP. An L-serine-binding site is contributed by Glu291. Residue Glu355 to Ser358 coordinates ATP. Ser391 is an L-serine binding site.

This sequence belongs to the class-II aminoacyl-tRNA synthetase family. Type-1 seryl-tRNA synthetase subfamily. Homodimer. The tRNA molecule binds across the dimer.

The protein resides in the cytoplasm. The enzyme catalyses tRNA(Ser) + L-serine + ATP = L-seryl-tRNA(Ser) + AMP + diphosphate + H(+). It carries out the reaction tRNA(Sec) + L-serine + ATP = L-seryl-tRNA(Sec) + AMP + diphosphate + H(+). It functions in the pathway aminoacyl-tRNA biosynthesis; selenocysteinyl-tRNA(Sec) biosynthesis; L-seryl-tRNA(Sec) from L-serine and tRNA(Sec): step 1/1. Functionally, catalyzes the attachment of serine to tRNA(Ser). Is also able to aminoacylate tRNA(Sec) with serine, to form the misacylated tRNA L-seryl-tRNA(Sec), which will be further converted into selenocysteinyl-tRNA(Sec). This chain is Serine--tRNA ligase, found in Serratia proteamaculans (strain 568).